The primary structure comprises 315 residues: Putative steroid dehydrogenase 3 (315 aa).

47-76 provides a ligand contact to NADP(+); sequence ASWAVITGGTDGIGKSFSFELAKRGFNIYI. The active site involves Tyr202.

It belongs to the short-chain dehydrogenases/reductases (SDR) family. 17-beta-HSD 3 subfamily.

In Caenorhabditis elegans, this protein is Putative steroid dehydrogenase 3 (stdh-3).